A 156-amino-acid chain; its full sequence is Small ribosomal subunit protein uS7 (156 aa).

The protein belongs to the universal ribosomal protein uS7 family. In terms of assembly, part of the 30S ribosomal subunit. Contacts proteins S9 and S11.

Functionally, one of the primary rRNA binding proteins, it binds directly to 16S rRNA where it nucleates assembly of the head domain of the 30S subunit. Is located at the subunit interface close to the decoding center, probably blocks exit of the E-site tRNA. The polypeptide is Small ribosomal subunit protein uS7 (Nocardioides sp. (strain ATCC BAA-499 / JS614)).